A 381-amino-acid chain; its full sequence is Homoserine O-succinyltransferase (381 aa).

The region spanning 45-360 is the AB hydrolase-1 domain; the sequence is NAVLVCHALN…PHGHDAFLLD (316 aa). S151 serves as the catalytic Nucleophile. Position 221 (R221) interacts with substrate. Residues D321 and H354 contribute to the active site. D355 contacts substrate.

Belongs to the AB hydrolase superfamily. MetX family. As to quaternary structure, homodimer.

The protein resides in the cytoplasm. It carries out the reaction L-homoserine + succinyl-CoA = O-succinyl-L-homoserine + CoA. The protein operates within amino-acid biosynthesis; L-methionine biosynthesis via de novo pathway; O-succinyl-L-homoserine from L-homoserine: step 1/1. In terms of biological role, transfers a succinyl group from succinyl-CoA to L-homoserine, forming succinyl-L-homoserine. This chain is Homoserine O-succinyltransferase, found in Burkholderia ambifaria (strain MC40-6).